A 161-amino-acid chain; its full sequence is Lipoprotein signal peptidase (161 aa).

Helical transmembrane passes span 9–29, 63–83, and 88–108; these read ISLL…WLIT, KMLF…IFYI, and FNLF…GNFI. Residues Asp118 and Asp136 contribute to the active site. A helical transmembrane segment spans residues 131 to 151; that stretch reads IFNIADSSLTIGVIFVIIALI.

It belongs to the peptidase A8 family.

The protein resides in the cell membrane. It carries out the reaction Release of signal peptides from bacterial membrane prolipoproteins. Hydrolyzes -Xaa-Yaa-Zaa-|-(S,diacylglyceryl)Cys-, in which Xaa is hydrophobic (preferably Leu), and Yaa (Ala or Ser) and Zaa (Gly or Ala) have small, neutral side chains.. Its pathway is protein modification; lipoprotein biosynthesis (signal peptide cleavage). Functionally, this protein specifically catalyzes the removal of signal peptides from prolipoproteins. In Staphylococcus epidermidis (strain ATCC 12228 / FDA PCI 1200), this protein is Lipoprotein signal peptidase.